Consider the following 413-residue polypeptide: Arginine biosynthesis bifunctional protein ArgJ (413 aa).

Substrate contacts are provided by threonine 160, lysine 186, threonine 197, glutamate 284, asparagine 408, and serine 413. The active-site Nucleophile is threonine 197.

The protein belongs to the ArgJ family. In terms of assembly, heterotetramer of two alpha and two beta chains.

The protein resides in the cytoplasm. It carries out the reaction N(2)-acetyl-L-ornithine + L-glutamate = N-acetyl-L-glutamate + L-ornithine. It catalyses the reaction L-glutamate + acetyl-CoA = N-acetyl-L-glutamate + CoA + H(+). The protein operates within amino-acid biosynthesis; L-arginine biosynthesis; L-ornithine and N-acetyl-L-glutamate from L-glutamate and N(2)-acetyl-L-ornithine (cyclic): step 1/1. It functions in the pathway amino-acid biosynthesis; L-arginine biosynthesis; N(2)-acetyl-L-ornithine from L-glutamate: step 1/4. Functionally, catalyzes two activities which are involved in the cyclic version of arginine biosynthesis: the synthesis of N-acetylglutamate from glutamate and acetyl-CoA as the acetyl donor, and of ornithine by transacetylation between N(2)-acetylornithine and glutamate. This is Arginine biosynthesis bifunctional protein ArgJ from Burkholderia pseudomallei (strain 1710b).